A 676-amino-acid chain; its full sequence is Probable metal-nicotianamine transporter YSL6 (676 aa).

Helical transmembrane passes span 38-58 (ITIRGLTVSALLGTLFCIITH), 62-82 (LTVGIIPSLNVAAGLLGFFFV), 110-130 (CVVACYGLAFSGGFGSYLIAM), 154-174 (GLWWMIGFLFVVSFLGLFSLV), 276-296 (IVNCSVLLGAIISWGILWPFV), 321-341 (VFIAIAIILGDGLYNLVKIIA), 392-412 (FAIAGYVGLAAISTATIPIIF), 413-433 (PPLKWYFVLCSYFIAPALAFC), 452-472 (IGLFIIASVVGSDGGVIAGLA), 510-530 (VGTAMGCVIAPLTFWLFWTAF), 561-581 (LPKHCLALCYGFFIAALIVNL), 604-624 (FYIGAYFAIDMFVGTVILFVW), and 639-659 (VASGLICGDGIWTIPSAILSI).

It belongs to the YSL (TC 2.A.67.2) family.

The protein localises to the membrane. May be involved in the transport of nicotianamine-chelated metals. This chain is Probable metal-nicotianamine transporter YSL6 (YSL6), found in Arabidopsis thaliana (Mouse-ear cress).